The sequence spans 62 residues: Frontoxin III (62 aa).

4 cysteine pairs are disulfide-bonded: Cys-3/Cys-24, Cys-17/Cys-41, Cys-43/Cys-54, and Cys-55/Cys-60.

Expressed by the venom gland.

It is found in the secreted. Its function is as follows. Binds to muscle nicotinic acetylcholine receptor (nAChR) and inhibit acetylcholine from binding to the receptor, thereby impairing neuromuscular transmission. This Micrurus frontalis (Coral snake) protein is Frontoxin III.